A 524-amino-acid polypeptide reads, in one-letter code: Pentatricopeptide repeat-containing protein At1g02150 (524 aa).

PPR repeat units follow at residues 168 to 202, 203 to 237, 238 to 268, 274 to 304, 309 to 339, 344 to 378, and 379 to 413; these read DRRV…GYAL, HPLP…DIRL, DIYS…MKSD, NWTT…VEAR, NRIP…YKSV, PNLG…KSSY, and DPRI…GGKP.

It belongs to the PPR family. P subfamily.

This is Pentatricopeptide repeat-containing protein At1g02150 from Arabidopsis thaliana (Mouse-ear cress).